A 283-amino-acid chain; its full sequence is Pantothenate synthetase (283 aa).

30-37 (MGNLHDGH) is a binding site for ATP. H37 serves as the catalytic Proton donor. Q61 is a (R)-pantoate binding site. Q61 is a binding site for beta-alanine. 149–152 (GEKD) is a binding site for ATP. Residue Q155 participates in (R)-pantoate binding. 186–189 (LSSR) contributes to the ATP binding site.

The protein belongs to the pantothenate synthetase family. As to quaternary structure, homodimer.

The protein resides in the cytoplasm. The catalysed reaction is (R)-pantoate + beta-alanine + ATP = (R)-pantothenate + AMP + diphosphate + H(+). It participates in cofactor biosynthesis; (R)-pantothenate biosynthesis; (R)-pantothenate from (R)-pantoate and beta-alanine: step 1/1. Its function is as follows. Catalyzes the condensation of pantoate with beta-alanine in an ATP-dependent reaction via a pantoyl-adenylate intermediate. The chain is Pantothenate synthetase from Escherichia coli (strain ATCC 8739 / DSM 1576 / NBRC 3972 / NCIMB 8545 / WDCM 00012 / Crooks).